The sequence spans 200 residues: Large ribosomal subunit protein uL4 (200 aa).

The disordered stretch occupies residues 42 to 65; sequence TRAQKTRSEVSGGGAKPWRQKGTG.

Belongs to the universal ribosomal protein uL4 family. Part of the 50S ribosomal subunit.

One of the primary rRNA binding proteins, this protein initially binds near the 5'-end of the 23S rRNA. It is important during the early stages of 50S assembly. It makes multiple contacts with different domains of the 23S rRNA in the assembled 50S subunit and ribosome. In terms of biological role, forms part of the polypeptide exit tunnel. In Vibrio cholerae serotype O1 (strain ATCC 39541 / Classical Ogawa 395 / O395), this protein is Large ribosomal subunit protein uL4.